The primary structure comprises 390 residues: Pyruvate dehydrogenase E1 component subunit alpha, somatic form, mitochondrial (390 aa).

Residues 1–29 constitute a mitochondrion transit peptide; sequence MRKMLAAVSRVLSGASQKPASRVLVASRN. Lysine 63 carries the post-translational modification N6-acetyllysine; alternate. Lysine 63 is subject to N6-succinyllysine; alternate. Residues histidine 92, tyrosine 118, arginine 119, alanine 157, glycine 165, valine 167, aspartate 196, glycine 197, alanine 198, asparagine 225, and tyrosine 227 each coordinate pyruvate. Thiamine diphosphate contacts are provided by tyrosine 118 and arginine 119. The thiamine diphosphate site is built by glycine 165, valine 167, aspartate 196, glycine 197, alanine 198, and asparagine 225. Mg(2+) is bound at residue aspartate 196. Mg(2+) is bound by residues asparagine 225 and tyrosine 227. Residue serine 232 is modified to Phosphoserine; by PDK1. Lysine 244 is modified (N6-acetyllysine; alternate). The residue at position 244 (lysine 244) is an N6-succinyllysine; alternate. Position 277 is an N6-succinyllysine (lysine 277). Thiamine diphosphate is bound at residue histidine 292. At serine 293 the chain carries Phosphoserine; by PDK1, PDK2, PDK3 and PDK4. Position 295 is a phosphoserine (serine 295). Phosphoserine; by PDK1, PDK2, PDK3 and PDK4 is present on serine 300. Position 301 is a phosphotyrosine (tyrosine 301). At lysine 313 the chain carries N6-acetyllysine; alternate. Residue lysine 313 is modified to N6-succinyllysine; alternate. N6-acetyllysine occurs at positions 321 and 336. Lysine 385 is modified (N6-succinyllysine).

As to quaternary structure, heterotetramer of two PDHA1 and two PDHB subunits. The heterotetramer interacts with DLAT, and is part of the multimeric pyruvate dehydrogenase complex that contains multiple copies of pyruvate dehydrogenase (E1), dihydrolipoamide acetyltransferase (DLAT, E2) and lipoamide dehydrogenase (DLD, E3). These subunits are bound to an inner core composed of about 48 DLAT and 12 PDHX molecules. Thiamine diphosphate serves as cofactor. Mg(2+) is required as a cofactor. Post-translationally, phosphorylation at Ser-232, Ser-293 and Ser-300 by PDK family kinases inactivates the enzyme; for this phosphorylation at a single site is sufficient. Dephosphorylation at all three sites, i.e. at Ser-232, Ser-293 and Ser-300, is required for reactivation. Acetylation alters the phosphorylation pattern. Deacetylated by SIRT3. In terms of tissue distribution, ubiquitous.

The protein resides in the mitochondrion matrix. The catalysed reaction is N(6)-[(R)-lipoyl]-L-lysyl-[protein] + pyruvate + H(+) = N(6)-[(R)-S(8)-acetyldihydrolipoyl]-L-lysyl-[protein] + CO2. With respect to regulation, pyruvate dehydrogenase activity is inhibited by phosphorylation of PDHA1; it is reactivated by dephosphorylation. The pyruvate dehydrogenase complex catalyzes the overall conversion of pyruvate to acetyl-CoA and CO(2), and thereby links the glycolytic pathway to the tricarboxylic cycle. The chain is Pyruvate dehydrogenase E1 component subunit alpha, somatic form, mitochondrial (PDHA1) from Homo sapiens (Human).